A 199-amino-acid chain; its full sequence is DnaJ homolog subfamily C member 5B (199 aa).

2 positions are modified to phosphoserine: Ser14 and Ser16. The 66-residue stretch at 19–84 (ALYEILGLQK…SKRNIYDKYG (66 aa)) folds into the J domain.

Interacts with the chaperone complex consisting of HSC70 and SGTA. In terms of processing, palmitoylated.

The protein resides in the membrane. The sequence is that of DnaJ homolog subfamily C member 5B (DNAJC5B) from Ailuropoda melanoleuca (Giant panda).